A 310-amino-acid chain; its full sequence is Alpha/beta hydrolase domain-containing protein 17A (310 aa).

The interval 38–61 (VPEPEPGPGGAGAAPSGPLRTSAA) is disordered. Residues S190, D255, and H284 each act as charge relay system in the active site. S307 carries the post-translational modification Phosphoserine.

This sequence belongs to the AB hydrolase superfamily. ABHD17 family. In terms of processing, palmitoylated on cysteine residues located in a cysteine cluster at the N-terminus which promotes membrane localization. Palmitoylation is required for post-synaptic localization and for depalmitoylating activity towards DLG4/PSD95. Expressed in brain (at protein level). Expressed in hippocampal neurons.

Its subcellular location is the cell membrane. It localises to the recycling endosome membrane. The protein localises to the cell projection. The protein resides in the dendritic spine. It is found in the postsynaptic density membrane. It catalyses the reaction S-hexadecanoyl-L-cysteinyl-[protein] + H2O = L-cysteinyl-[protein] + hexadecanoate + H(+). Its function is as follows. Hydrolyzes fatty acids from S-acylated cysteine residues in proteins. Has depalmitoylating activity towards NRAS. Has depalmitoylating activity towards DLG4/PSD95. May have depalmitoylating activity towards MAP6. This chain is Alpha/beta hydrolase domain-containing protein 17A, found in Rattus norvegicus (Rat).